Here is a 494-residue protein sequence, read N- to C-terminus: Glycosyl hydrolase family 109 protein (494 aa).

Disordered stretches follow at residues 1 to 35 (MNDA…LRTT) and 59 to 86 (EAAQ…MAGV). Residues 1–55 (MNDAAPQNPGQDEAKGTGEKDNGGSMSPRSALRTTAGVAGAGLGLSALGTGTASA) constitute a signal peptide (tat-type signal). The segment covering 12 to 22 (DEAKGTGEKDN) has biased composition (basic and acidic residues). Residues 103 to 104 (NR), aspartate 125, 174 to 177 (WDFH), 194 to 195 (EC), and asparagine 223 each bind NAD(+). Substrate contacts are provided by residues tyrosine 252, arginine 271, 283-286 (YPNH), and tyrosine 365. Tyrosine 283 is a binding site for NAD(+). The interval 463–494 (KANGKPQQIPDFTRGEWKKSRPGTDSEKPSEP) is disordered. Residues 475–494 (TRGEWKKSRPGTDSEKPSEP) are compositionally biased toward basic and acidic residues.

It belongs to the Gfo/Idh/MocA family. Glycosyl hydrolase 109 subfamily. Requires NAD(+) as cofactor. Post-translationally, predicted to be exported by the Tat system. The position of the signal peptide cleavage has not been experimentally proven.

In terms of biological role, glycosidase. The protein is Glycosyl hydrolase family 109 protein of Streptomyces niveus (Streptomyces spheroides).